The primary structure comprises 700 residues: Methionine--tRNA ligase (700 aa).

Residues 16-26 carry the 'HIGH' region motif; the sequence is PYANGAFHVGH. The Zn(2+) site is built by Cys-148, Cys-151, Cys-161, and Cys-164. The short motif at 337 to 341 is the 'KMSKS' region element; that stretch reads KMSKS. Position 340 (Lys-340) interacts with ATP. Residues 594–700 form the tRNA-binding domain; sequence DFAKIDLRIA…PGAEPGMRVG (107 aa).

Belongs to the class-I aminoacyl-tRNA synthetase family. MetG type 1 subfamily. As to quaternary structure, homodimer. The cofactor is Zn(2+).

It localises to the cytoplasm. It catalyses the reaction tRNA(Met) + L-methionine + ATP = L-methionyl-tRNA(Met) + AMP + diphosphate. Functionally, is required not only for elongation of protein synthesis but also for the initiation of all mRNA translation through initiator tRNA(fMet) aminoacylation. This chain is Methionine--tRNA ligase, found in Janthinobacterium sp. (strain Marseille) (Minibacterium massiliensis).